The chain runs to 91 residues: Potassium channel toxin TtrKIK (91 aa).

Residues 1 to 25 form the signal peptide; it reads MVATNRCCVFALLFALLLVHSLTEA. A propeptide spanning residues 26-44 is cleaved from the precursor; the sequence is GKGKEVLGKIKDKLIEAKD. Residues 58 to 91 enclose the BetaSPN-type CS-alpha/beta domain; that stretch reads EYACPAIEKFCEDHCAAKKAVGKCDDFKCNCIKL. 3 disulfide bridges follow: Cys61/Cys81, Cys68/Cys86, and Cys72/Cys88.

This sequence belongs to the long chain scorpion toxin family. Class 2 subfamily. In terms of tissue distribution, expressed by the venom gland.

It is found in the secreted. Its function is as follows. The full peptide presents antibacterial and cytotoxic activities. The synthetic C-terminus (AA 33-76) inhibits voltage-gated potassium channels Kv1.1/KCNA1, Kv1.2/KCNA2, and Kv1.3/KCNA3. This Tityus trivittatus (Argentinean scorpion) protein is Potassium channel toxin TtrKIK.